The chain runs to 428 residues: Glucose-1-phosphate adenylyltransferase (428 aa).

Alpha-D-glucose 1-phosphate contacts are provided by residues Y114, G179, 194–195 (EK), and S212.

The protein belongs to the bacterial/plant glucose-1-phosphate adenylyltransferase family. As to quaternary structure, homotetramer.

It catalyses the reaction alpha-D-glucose 1-phosphate + ATP + H(+) = ADP-alpha-D-glucose + diphosphate. Its pathway is glycan biosynthesis; glycogen biosynthesis. Its function is as follows. Involved in the biosynthesis of ADP-glucose, a building block required for the elongation reactions to produce glycogen. Catalyzes the reaction between ATP and alpha-D-glucose 1-phosphate (G1P) to produce pyrophosphate and ADP-Glc. The chain is Glucose-1-phosphate adenylyltransferase from Yersinia pseudotuberculosis serotype IB (strain PB1/+).